The chain runs to 271 residues: Glutamate racemase (271 aa).

Residues 10–11 (DS) and 42–43 (YG) each bind substrate. The active-site Proton donor/acceptor is cysteine 73. 74-75 (NT) is a substrate binding site. Cysteine 183 acts as the Proton donor/acceptor in catalysis. A substrate-binding site is contributed by 184–185 (TH).

Belongs to the aspartate/glutamate racemases family.

It catalyses the reaction L-glutamate = D-glutamate. It participates in cell wall biogenesis; peptidoglycan biosynthesis. In terms of biological role, provides the (R)-glutamate required for cell wall biosynthesis. The chain is Glutamate racemase from Streptococcus thermophilus (strain CNRZ 1066).